The sequence spans 94 residues: Small ribosomal subunit protein uS17 (94 aa).

This sequence belongs to the universal ribosomal protein uS17 family. In terms of assembly, part of the 30S ribosomal subunit.

In terms of biological role, one of the primary rRNA binding proteins, it binds specifically to the 5'-end of 16S ribosomal RNA. This chain is Small ribosomal subunit protein uS17, found in Deinococcus geothermalis (strain DSM 11300 / CIP 105573 / AG-3a).